Here is a 359-residue protein sequence, read N- to C-terminus: Biotin synthase (359 aa).

A Radical SAM core domain is found at 47–276; the sequence is HHGRRVRIHV…EADLRMAGGR (230 aa). [4Fe-4S] cluster is bound by residues cysteine 65, cysteine 69, and cysteine 72. [2Fe-2S] cluster is bound by residues cysteine 109, cysteine 141, cysteine 201, and arginine 271. Residues 320–359 are disordered; it reads EPVIVEDGPERQTPATADDTPSGDPEAADRRRQPSAGPAG.

It belongs to the radical SAM superfamily. Biotin synthase family. As to quaternary structure, homodimer. The cofactor is [4Fe-4S] cluster. Requires [2Fe-2S] cluster as cofactor.

It carries out the reaction (4R,5S)-dethiobiotin + (sulfur carrier)-SH + 2 reduced [2Fe-2S]-[ferredoxin] + 2 S-adenosyl-L-methionine = (sulfur carrier)-H + biotin + 2 5'-deoxyadenosine + 2 L-methionine + 2 oxidized [2Fe-2S]-[ferredoxin]. It participates in cofactor biosynthesis; biotin biosynthesis; biotin from 7,8-diaminononanoate: step 2/2. Functionally, catalyzes the conversion of dethiobiotin (DTB) to biotin by the insertion of a sulfur atom into dethiobiotin via a radical-based mechanism. The chain is Biotin synthase from Salinibacter ruber (strain DSM 13855 / M31).